Reading from the N-terminus, the 162-residue chain is uncharacterized protein (162 aa).

Residues 7-27 traverse the membrane as a helical segment; it reads LGGVMLFAIVSLMVCGCMVVF.

It is found in the membrane. This is an uncharacterized protein from Methanocaldococcus jannaschii (strain ATCC 43067 / DSM 2661 / JAL-1 / JCM 10045 / NBRC 100440) (Methanococcus jannaschii).